The following is a 399-amino-acid chain: 1-deoxy-D-xylulose 5-phosphate reductoisomerase (399 aa).

The NADPH site is built by Thr-11, Gly-12, Ser-13, Ile-14, and Asn-125. Position 126 (Lys-126) interacts with 1-deoxy-D-xylulose 5-phosphate. Residue Glu-127 coordinates NADPH. Asp-151 serves as a coordination point for Mn(2+). Ser-152, Glu-153, Ser-186, and His-209 together coordinate 1-deoxy-D-xylulose 5-phosphate. Mn(2+) is bound at residue Glu-153. Gly-215 contacts NADPH. The 1-deoxy-D-xylulose 5-phosphate site is built by Ser-222, Asn-227, Lys-228, and Glu-231. Mn(2+) is bound at residue Glu-231.

It belongs to the DXR family. It depends on Mg(2+) as a cofactor. Mn(2+) is required as a cofactor.

It carries out the reaction 2-C-methyl-D-erythritol 4-phosphate + NADP(+) = 1-deoxy-D-xylulose 5-phosphate + NADPH + H(+). Its pathway is isoprenoid biosynthesis; isopentenyl diphosphate biosynthesis via DXP pathway; isopentenyl diphosphate from 1-deoxy-D-xylulose 5-phosphate: step 1/6. Catalyzes the NADPH-dependent rearrangement and reduction of 1-deoxy-D-xylulose-5-phosphate (DXP) to 2-C-methyl-D-erythritol 4-phosphate (MEP). This chain is 1-deoxy-D-xylulose 5-phosphate reductoisomerase, found in Acinetobacter baumannii (strain SDF).